The sequence spans 714 residues: GATA zinc finger domain-containing protein 10 (714 aa).

6 disordered regions span residues 28-97, 115-180, 266-362, 394-419, 454-476, and 528-621; these read YIQQ…NKQI, TMPH…QQQQ, MPMN…QQQQ, QQQQ…ESMD, MHLQ…QQIQ, and IQQQ…RRRT. Composition is skewed to low complexity over residues 30–94 and 130–147; these read QQQQ…NNNN and QQQQ…QHPH. A compositionally biased stretch (basic residues) spans 148–168; sequence QQQHPHQQQHPHQQQHPHQQQ. Low complexity predominate over residues 169-180; that stretch reads HPHQQQIQQQQQ. Residues 271–282 show a composition bias toward polar residues; it reads GGNSRKNSFDMY. 2 stretches are compositionally biased toward low complexity: residues 283-322 and 340-362; these read NNNN…NNNI and QHQQ…QQQQ. Low complexity-rich tracts occupy residues 457-476 and 528-549; these read QQQQ…QQIQ and IQQQ…TPNN. Positions 550 to 569 are enriched in polar residues; sequence GSPSSSDGKSPVNSNTAITS. The span at 570–588 shows a compositional bias: low complexity; sequence NNNNNNNNNNNNNNNNNNN. The GATA-type zinc-finger motif lies at 631-656; sequence CHYCEVTETPEWRRGPDGDHTLCNAC. Residues 661 to 694 are a coiled coil; the sequence is AKSQKKLAREKELEKQKELEREKERENTRKHSID. Residues 667-693 are compositionally biased toward basic and acidic residues; it reads LAREKELEKQKELEREKERENTRKHSI. A disordered region spans residues 667-714; sequence LAREKELEKQKELEREKERENTRKHSIDFMLMNDTSSAPTNSQNPTPN. The span at 699-714 shows a compositional bias: polar residues; the sequence is NDTSSAPTNSQNPTPN.

The chain is GATA zinc finger domain-containing protein 10 (gtaJ) from Dictyostelium discoideum (Social amoeba).